Here is an 85-residue protein sequence, read N- to C-terminus: U4-theraphotoxin-Hhn1a (85 aa).

The signal sequence occupies residues 1–22 (MKMTLIAILTCAAVLVLHITAA). A propeptide spanning residues 23-48 (EELEAESQLMEVGMPDTELEAVDEER) is cleaved from the precursor. 3 cysteine pairs are disulfide-bonded: Cys52–Cys66, Cys56–Cys77, and Cys71–Cys82.

It belongs to the neurotoxin 12 (Hwtx-2) family. 02 (Hwtx-2) subfamily. As to quaternary structure, monomer. Expressed by the venom gland.

It is found in the secreted. In terms of biological role, neurotoxin active on both insects and mammals. The protein is U4-theraphotoxin-Hhn1a of Cyriopagopus hainanus (Chinese bird spider).